We begin with the raw amino-acid sequence, 109 residues long: Ribulose bisphosphate carboxylase small subunit (109 aa).

This sequence belongs to the RuBisCO small chain family. Heterohexadecamer of 8 large and 8 small subunits. Forms complexes of many stoichiometries with Raf1 and RbcL.

The protein resides in the carboxysome. In terms of biological role, ruBisCO catalyzes two reactions: the carboxylation of D-ribulose 1,5-bisphosphate, the primary event in carbon dioxide fixation, as well as the oxidative fragmentation of the pentose substrate in the photorespiration process. Both reactions occur simultaneously and in competition at the same active site. Although the small subunit is not catalytic it is essential for maximal activity. This is Ribulose bisphosphate carboxylase small subunit from Nostoc sp. (strain PCC 7120 / SAG 25.82 / UTEX 2576).